The following is a 456-amino-acid chain: ATP synthase subunit beta (456 aa).

Residue 135–142 participates in ATP binding; the sequence is GGAGVGKT.

Belongs to the ATPase alpha/beta chains family. In terms of assembly, F-type ATPases have 2 components, CF(1) - the catalytic core - and CF(0) - the membrane proton channel. CF(1) has five subunits: alpha(3), beta(3), gamma(1), delta(1), epsilon(1). CF(0) has four main subunits: a(1), b(1), b'(1) and c(9-12).

The protein localises to the cellular thylakoid membrane. The enzyme catalyses ATP + H2O + 4 H(+)(in) = ADP + phosphate + 5 H(+)(out). Produces ATP from ADP in the presence of a proton gradient across the membrane. The catalytic sites are hosted primarily by the beta subunits. The protein is ATP synthase subunit beta (atpD) of Acaryochloris marina (strain MBIC 11017).